The primary structure comprises 602 residues: Elongation factor 4 (602 aa).

Positions 7 to 188 (ENIRNFSIIA…SIIRLVPPPK (182 aa)) constitute a tr-type G domain. Residues 19–24 (DHGKST) and 135–138 (NKID) each bind GTP.

The protein belongs to the TRAFAC class translation factor GTPase superfamily. Classic translation factor GTPase family. LepA subfamily.

Its subcellular location is the cell inner membrane. It carries out the reaction GTP + H2O = GDP + phosphate + H(+). Required for accurate and efficient protein synthesis under certain stress conditions. May act as a fidelity factor of the translation reaction, by catalyzing a one-codon backward translocation of tRNAs on improperly translocated ribosomes. Back-translocation proceeds from a post-translocation (POST) complex to a pre-translocation (PRE) complex, thus giving elongation factor G a second chance to translocate the tRNAs correctly. Binds to ribosomes in a GTP-dependent manner. This is Elongation factor 4 from Chlamydia trachomatis serovar D (strain ATCC VR-885 / DSM 19411 / UW-3/Cx).